The following is a 687-amino-acid chain: Cytochrome b/c1 (687 aa).

The helical transmembrane segment at 46-66 (FGAILSFMLGMQILTGVILAM) threads the bilayer. The heme b site is built by His96 and His110. 2 helical membrane passes run 126 to 146 (VLWI…FMGY) and 160 to 180 (VITN…TLLW). His197 and His211 together coordinate heme b. 6 helical membrane-spanning segments follow: residues 199-219 (LLPF…HVAG), 247-267 (FGVA…PNYL), 305-325 (LAGV…PWLD), 337-357 (LAKQ…YLGA), 363-383 (IYVI…LIVL), and 410-430 (AVAS…GSLQ). The interval 404–434 (LAKGGKAVASVAIALVAAGALFLGSLQDARA) is internal signal sequence. Positions 458 to 643 (GALQRGLKVY…TVAQYSKDVT (186 aa)) constitute a Cytochrome c domain. Cys471, Cys474, His475, and Met616 together coordinate heme c. The chain crosses the membrane as a helical span at residues 666–678 (VFLIIFAGLMYFT).

This sequence belongs to the cytochrome b family. In terms of assembly, the main subunits of complex b-c1 are: cytochrome b, cytochrome c1 and the Rieske protein. The cofactor is heme b. Requires heme c as cofactor. Post-translationally, the protein is post-translationally processed into cytochrome b and c1. This occurs by processing between residues 434 and 435 without processing between cytochrome b and the N-terminal of the putative signal sequence domain.

It localises to the cell inner membrane. Functionally, component of the ubiquinol-cytochrome c reductase complex (complex III or cytochrome b-c1 complex), which is a respiratory chain that generates an electrochemical potential coupled to ATP synthesis. c1 functions as an electron donor to cytochrome c. This Bradyrhizobium diazoefficiens (strain JCM 10833 / BCRC 13528 / IAM 13628 / NBRC 14792 / USDA 110) protein is Cytochrome b/c1 (fbcH).